We begin with the raw amino-acid sequence, 143 residues long: Mediator of RNA polymerase II transcription subunit 10 (143 aa).

The interval 123 to 143 (GAHSNTEISTNPGQKRQGNVS) is disordered. Positions 124–143 (AHSNTEISTNPGQKRQGNVS) are enriched in polar residues.

Belongs to the Mediator complex subunit 10 family. In terms of assembly, component of the Mediator complex.

The protein localises to the nucleus. Component of the Mediator complex, a coactivator involved in the regulated transcription of nearly all RNA polymerase II-dependent genes. Mediator functions as a bridge to convey information from gene-specific regulatory proteins to the basal RNA polymerase II transcription machinery. Mediator is recruited to promoters by direct interactions with regulatory proteins and serves as a scaffold for the assembly of a functional preinitiation complex with RNA polymerase II and the general transcription factors. The polypeptide is Mediator of RNA polymerase II transcription subunit 10 (NUT2) (Yarrowia lipolytica (strain CLIB 122 / E 150) (Yeast)).